The sequence spans 63 residues: Beta-defensin 5 (63 aa).

A signal peptide spans 1-22; that stretch reads MRIHYLLFSFLLVLLSPLSVFT. Glutamine 23 carries the pyrrolidone carboxylic acid modification. Cystine bridges form between cysteine 31/cysteine 59, cysteine 38/cysteine 52, and cysteine 42/cysteine 60.

Belongs to the beta-defensin family.

The protein localises to the secreted. Functionally, has antibacterial activity. In Rattus norvegicus (Rat), this protein is Beta-defensin 5 (Defb5).